The sequence spans 567 residues: MRQSQAFIPTLREVPADAEVKSHQLLLRAGFIRQSASGVYTFLPLGQRVLQKVEAIIREEMNRIGAMELFMPALQPAELWQQSGRWYSYGPELMRLKDRHERDFALGPTHEEMITAIVRDEVKTYKRLPLVLYQIQTKFRDEKRPRFGLLRGREFMMKDAYSFHTSKESLDETYNNMYEAYANIFRRCGLNFRAVIADSGAIGGKDTHEFMVLSDIGEDTIAYSDASDYAANIEMAPVVATYEKSDEPPAELKKVATPGQKTIAEVASHLQISPERCIKSLLFNVDGRYVLVLVRGDHEANEVKVKNVLDATVVELATPEETERVMNAPIGSLGPIGVSEDVTVIADHAVAAITNGVCGANEEGYHYIGVNPGRDFAVSQYADLRFVKEGDPSPDGKGTIRFARGIEVGHVFKLGTKYSEAMNAVYLDENGQTQTMIMGCYGIGVSRLVAAIAEQFADEHGLVWPASVAPFHIHLLTANAKSDEQRALAEEWYEKLGQAGFEVLYDDRPERAGVKFADSDLIGIPLRVTVGKRAGEGVVEVKVRKTGETFDVPVSELVDTARRLLQS.

The protein belongs to the class-II aminoacyl-tRNA synthetase family. ProS type 1 subfamily. Homodimer.

The protein localises to the cytoplasm. The enzyme catalyses tRNA(Pro) + L-proline + ATP = L-prolyl-tRNA(Pro) + AMP + diphosphate. Catalyzes the attachment of proline to tRNA(Pro) in a two-step reaction: proline is first activated by ATP to form Pro-AMP and then transferred to the acceptor end of tRNA(Pro). As ProRS can inadvertently accommodate and process non-cognate amino acids such as alanine and cysteine, to avoid such errors it has two additional distinct editing activities against alanine. One activity is designated as 'pretransfer' editing and involves the tRNA(Pro)-independent hydrolysis of activated Ala-AMP. The other activity is designated 'posttransfer' editing and involves deacylation of mischarged Ala-tRNA(Pro). The misacylated Cys-tRNA(Pro) is not edited by ProRS. This Geobacillus kaustophilus (strain HTA426) protein is Proline--tRNA ligase.